We begin with the raw amino-acid sequence, 196 residues long: MINKIYGKVIEKKESSLVLMTAVFEFELLVSAFCLANFKLLDKVELFTYLYTKENELKLFGFLNSDERETFKSLIGVSGIGPRAALRVLSNIRYNEFKDAIDREDIELIAKIKGIGKKMAGKMFLHLQGKLLINNELESSLFRFKELEESIVSMGFDRKIVNSKLKEAFNLVEFSNLKDSEKEQFLFKEVLKRMSN.

The tract at residues 1–63 (MINKIYGKVI…ENELKLFGFL (63 aa)) is domain I. Positions 64–139 (NSDERETFKS…KLLINNELES (76 aa)) are domain II. Residue S139 is a region of interest, flexible linker. Positions 139–196 (SSLFRFKELEESIVSMGFDRKIVNSKLKEAFNLVEFSNLKDSEKEQFLFKEVLKRMSN) are domain III.

The protein belongs to the RuvA family. Homotetramer. Forms an RuvA(8)-RuvB(12)-Holliday junction (HJ) complex. HJ DNA is sandwiched between 2 RuvA tetramers; dsDNA enters through RuvA and exits via RuvB. An RuvB hexamer assembles on each DNA strand where it exits the tetramer. Each RuvB hexamer is contacted by two RuvA subunits (via domain III) on 2 adjacent RuvB subunits; this complex drives branch migration. In the full resolvosome a probable DNA-RuvA(4)-RuvB(12)-RuvC(2) complex forms which resolves the HJ.

It is found in the cytoplasm. Functionally, the RuvA-RuvB-RuvC complex processes Holliday junction (HJ) DNA during genetic recombination and DNA repair, while the RuvA-RuvB complex plays an important role in the rescue of blocked DNA replication forks via replication fork reversal (RFR). RuvA specifically binds to HJ cruciform DNA, conferring on it an open structure. The RuvB hexamer acts as an ATP-dependent pump, pulling dsDNA into and through the RuvAB complex. HJ branch migration allows RuvC to scan DNA until it finds its consensus sequence, where it cleaves and resolves the cruciform DNA. The chain is Holliday junction branch migration complex subunit RuvA from Borreliella afzelii (strain PKo) (Borrelia afzelii).